Consider the following 393-residue polypeptide: Histidinol dehydrogenase (393 aa).

Positions 112, 171, and 194 each coordinate NAD(+). Substrate contacts are provided by Thr-217, Gln-239, and His-242. 2 residues coordinate Zn(2+): Gln-239 and His-242. Residues Glu-293 and His-294 each act as proton acceptor in the active site. Positions 294, 326, 379, and 384 each coordinate substrate. Position 326 (Asp-326) interacts with Zn(2+). A Zn(2+)-binding site is contributed by His-384.

The protein belongs to the histidinol dehydrogenase family. Requires Zn(2+) as cofactor.

It carries out the reaction L-histidinol + 2 NAD(+) + H2O = L-histidine + 2 NADH + 3 H(+). It participates in amino-acid biosynthesis; L-histidine biosynthesis; L-histidine from 5-phospho-alpha-D-ribose 1-diphosphate: step 9/9. Its function is as follows. Catalyzes the sequential NAD-dependent oxidations of L-histidinol to L-histidinaldehyde and then to L-histidine. In Sulfolobus acidocaldarius (strain ATCC 33909 / DSM 639 / JCM 8929 / NBRC 15157 / NCIMB 11770), this protein is Histidinol dehydrogenase.